Consider the following 141-residue polypeptide: Hemoglobin subunit alpha (141 aa).

Positions 1 to 141 (VLSSKDKTNV…VSTVLTSKYR (141 aa)) constitute a Globin domain. Ser-3 carries the phosphoserine modification. Position 7 is an N6-succinyllysine (Lys-7). Thr-8 bears the Phosphothreonine mark. Lys-11 bears the N6-succinyllysine mark. N6-acetyllysine; alternate is present on Lys-16. Lys-16 bears the N6-succinyllysine; alternate mark. The residue at position 24 (Tyr-24) is a Phosphotyrosine. At Lys-40 the chain carries N6-succinyllysine. The residue at position 49 (Ser-49) is a Phosphoserine. O2 is bound at residue His-58. His-87 contributes to the heme b binding site. Residue Ser-102 is modified to Phosphoserine. Thr-108 is subject to Phosphothreonine. Ser-124 is modified (phosphoserine). Residues Thr-134 and Thr-137 each carry the phosphothreonine modification. The residue at position 138 (Ser-138) is a Phosphoserine.

Belongs to the globin family. In terms of assembly, heterotetramer of two alpha chains and two beta chains. In terms of tissue distribution, red blood cells.

Its function is as follows. Involved in oxygen transport from the lung to the various peripheral tissues. Functionally, hemopressin acts as an antagonist peptide of the cannabinoid receptor CNR1. Hemopressin-binding efficiently blocks cannabinoid receptor CNR1 and subsequent signaling. The polypeptide is Hemoglobin subunit alpha (HBA) (Camelus dromedarius (Dromedary)).